We begin with the raw amino-acid sequence, 765 residues long: Probable ATP-dependent RNA helicase DDX27 (765 aa).

A phosphoserine mark is found at S23, S25, and S48. A compositionally biased stretch (acidic residues) spans 43 to 63 (LGKNRSADFNPDFVFTEKEGT). 2 disordered regions span residues 43–83 (LGKN…KRAA) and 111–179 (KEKE…FFED). The Required for interaction with the PEBOW complex signature appears at 55 to 57 (FVF). Positions 129 to 156 (ENDEEGSEDEASETDYSSADENILTKAD) are enriched in basic and acidic residues. S135 and S146 each carry phosphoserine. The segment covering 157-172 (TLKVKDRKKKKKKGQE) has biased composition (acidic residues). Residues 164 to 169 (KKKKKK) carry the Nuclear localization signal motif. The Q motif motif lies at 187–215 (LSFQDMNLSRPLLKAITAMGFKQPTPIQK). The Helicase ATP-binding domain maps to 218-392 (IPVGLLGKDI…SVSLKNPVRI (175 aa)). 231–238 (AATGTGKT) is a binding site for ATP. The DEAD box signature appears at 340-343 (DEAD). In terms of domain architecture, Helicase C-terminal spans 426 to 572 (LLTRTFTDHV…DVILKFRDKI (147 aa)). The span at 716-725 (VFDEELTNTS) shows a compositional bias: basic residues.

Belongs to the DEAD box helicase family. DDX27/DRS1 subfamily. As to quaternary structure, associates with PeBoW complex, composed of BOP1, PES1 and WDR12. Interacts directly with BOP1 and PES1.

The protein localises to the nucleus. Its subcellular location is the nucleolus. It localises to the chromosome. It catalyses the reaction ATP + H2O = ADP + phosphate + H(+). Probable ATP-dependent RNA helicase. Component of the nucleolar ribosomal RNA (rRNA) processing machinery that regulates 3' end formation of ribosomal 47S rRNA. This chain is Probable ATP-dependent RNA helicase DDX27 (DDX27), found in Homo sapiens (Human).